The sequence spans 152 residues: Small ribosomal subunit protein uS13 (152 aa).

At Ser-2 the chain carries N-acetylserine. Lys-91 is covalently cross-linked (Glycyl lysine isopeptide (Lys-Gly) (interchain with G-Cter in SUMO2)). Lys-94 and Lys-106 each carry N6-acetyllysine; alternate. Glycyl lysine isopeptide (Lys-Gly) (interchain with G-Cter in SUMO2); alternate cross-links involve residues Lys-94 and Lys-106.

The protein belongs to the universal ribosomal protein uS13 family. In terms of assembly, component of the small ribosomal subunit.

Its subcellular location is the cytoplasm. Its function is as follows. Component of the small ribosomal subunit. The ribosome is a large ribonucleoprotein complex responsible for the synthesis of proteins in the cell. The sequence is that of Small ribosomal subunit protein uS13 (RPS18) from Homo sapiens (Human).